A 251-amino-acid polypeptide reads, in one-letter code: MKIIISPAKKMNMDGDFLSPRNIPVYLEKAKKLQRHLQSLPYEELRKLLCCNDEIAGLNYERYQTMDLSGYTSPAILAYDGIQYKYMAPQVFEDDYFDYIEKHLRILSGFYGILKPFDGVVPYRLEMQAKLKTDFCRNLYDYWQDDIYRELTQEDTTILNLASAEYSKTIEKYLTAGINYVKCVFGELRDGRVIEKGVYVKMARGEMVRFMAEKAIKDLEQIKEFNRLGFRYREQLSDNNTFVFVKAMAEK.

It belongs to the UPF0246 family.

The protein is UPF0246 protein DSY0297 of Desulfitobacterium hafniense (strain Y51).